The primary structure comprises 101 residues: ATP-dependent Clp protease adapter protein ClpS (101 aa).

The protein belongs to the ClpS family. In terms of assembly, binds to the N-terminal domain of the chaperone ClpA.

Functionally, involved in the modulation of the specificity of the ClpAP-mediated ATP-dependent protein degradation. The sequence is that of ATP-dependent Clp protease adapter protein ClpS from Treponema denticola (strain ATCC 35405 / DSM 14222 / CIP 103919 / JCM 8153 / KCTC 15104).